A 359-amino-acid polypeptide reads, in one-letter code: Histidinol-phosphate aminotransferase (359 aa).

K212 carries the N6-(pyridoxal phosphate)lysine modification.

This sequence belongs to the class-II pyridoxal-phosphate-dependent aminotransferase family. Histidinol-phosphate aminotransferase subfamily. As to quaternary structure, homodimer. Pyridoxal 5'-phosphate is required as a cofactor.

The enzyme catalyses L-histidinol phosphate + 2-oxoglutarate = 3-(imidazol-4-yl)-2-oxopropyl phosphate + L-glutamate. The protein operates within amino-acid biosynthesis; L-histidine biosynthesis; L-histidine from 5-phospho-alpha-D-ribose 1-diphosphate: step 7/9. This chain is Histidinol-phosphate aminotransferase, found in Buchnera aphidicola subsp. Schlechtendalia chinensis.